We begin with the raw amino-acid sequence, 64 residues long: Phylloxin-B1 (64 aa).

The first 22 residues, 1-22, serve as a signal peptide directing secretion; it reads MVFLKKSLLLVLFVGLVSLSIC. A propeptide spanning residues 23 to 42 is cleaved from the precursor; it reads EENKREEHEEIEENKEKAEE. Residue glutamine 63 is modified to Glutamine amide.

Expressed by the skin glands.

The protein resides in the secreted. Antimicrobial peptide against the wall-less bacteria A.laidlawii and S.melliferum, the Gram-positive bacteria B.megaterium KM, C.glutamicum ATCC 27853 and M.luteus ATCC 27853 and the Gram-negative-bacteria R.meliloti 102F34 and E.coli K12. The chain is Phylloxin-B1 from Phyllomedusa bicolor (Two-colored leaf frog).